The following is a 428-amino-acid chain: Divergent protein kinase domain 1A (428 aa).

The Cytoplasmic segment spans residues Met-1–Lys-27. The chain crosses the membrane as a helical span at residues Tyr-28–Ser-48. The Lumenal portion of the chain corresponds to Thr-49–Ser-428.

This sequence belongs to the DIPK family. In terms of processing, among the many cysteines in the lumenal domain, most are probably involved in disulfide bonds.

The protein resides in the endoplasmic reticulum membrane. The chain is Divergent protein kinase domain 1A from Homo sapiens (Human).